The primary structure comprises 530 residues: Hyccin 2 (530 aa).

2 positions are modified to phosphothreonine: Thr30 and Thr306. Phosphoserine occurs at positions 321 and 341. Residues 328–404 form a disordered region; it reads RREGAEGLNG…SNESPRDSVV (77 aa). Polar residues predominate over residues 353 to 373; the sequence is SGASLSSQPHGTKPPSSSQRG. 4 positions are modified to phosphoserine: Ser430, Ser442, Ser444, and Ser491. The interval 502–530 is disordered; sequence EGKELLSPGAPLTKQSRSPSFNMQLISQV. Residues 514 to 530 are compositionally biased toward polar residues; that stretch reads TKQSRSPSFNMQLISQV.

It belongs to the Hyccin family. Component of a phosphatidylinositol 4-kinase (PI4K) complex, composed of PI4KA, EFR3 (EFR3A or EFR3B), TTC7 (TTC7A or TTC7B) and HYCC (HYCC1 or HYCC2). Expressed in the central nervous system. Expressed at much lower level in oligodendrocytes than in neurons.

It is found in the cytoplasm. The protein localises to the cytosol. Its subcellular location is the cell membrane. Component of a complex required to localize phosphatidylinositol 4-kinase (PI4K) to the plasma membrane. This chain is Hyccin 2 (Hycc2), found in Mus musculus (Mouse).